The chain runs to 521 residues: Cytochrome P450 monooxygenase sdnF (521 aa).

A helical membrane pass occupies residues 19–39 (YLGLLLSGTVLYTVYKLIIAI). 5 N-linked (GlcNAc...) asparagine glycosylation sites follow: asparagine 178, asparagine 186, asparagine 191, asparagine 309, and asparagine 416. Cysteine 460 provides a ligand contact to heme.

It belongs to the cytochrome P450 family. Heme is required as a cofactor.

The protein localises to the membrane. It participates in antibiotic biosynthesis. Its function is as follows. Cytochrome P450 monooxygenase; part of the gene cluster that mediates the biosynthesis of sordarin and hypoxysordarin, glycoside antibiotics with a unique tetracyclic diterpene aglycone structure. First, the geranylgeranyl diphosphate synthase sdnC constructs GGDP from farnesyl diphosphate and isopentenyl diphosphate. The diterpene cyclase sdnA then catalyzes the cyclization of GGDP to afford cycloaraneosene. Cycloaraneosene is then hydroxylated four times by the putative cytochrome P450 monooxygenases sdnB, sdnE, sdnF and sdnH to give a hydroxylated cycloaraneosene derivative such as cycloaraneosene-8,9,13,19-tetraol. Although the order of the hydroxylations is unclear, at least C8, C9 and C13 of the cycloaraneosene skeleton are hydroxylated before the sordaricin formation. Dehydration of the 13-hydroxy group of the hydroxylated cycloaraneosene derivative might be catalyzed by an unassigned hypothetical protein such as sdnG and sdnP to construct the cyclopentadiene moiety. The FAD-dependent oxidoreductase sdnN is proposed to catalyze the oxidation at C9 of the hydroxylated cycloaraneosene derivative and also catalyze the Baeyer-Villiger oxidation to give the lactone intermediate. The presumed lactone intermediate would be hydrolyzed to give an acrolein moiety and a carboxylate moiety. Then, [4+2]cycloaddition would occur between the acrolein moiety and the cyclopentadiene moiety to give sordaricin. SdnN might also be involved in the [4+2]cycloaddition after the hypothesized oxidation to accommodate the oxidized product and prompt the [4+2]cycloaddition. GDP-6-deoxy-D-altrose may be biosynthesized from GDP-D-mannose by the putative GDP-mannose-4,6-dehydratase sdnI and the short-chain dehydrogenase sdnK. The glycosyltransferase sdnJ catalyzes the attachment of 6-deoxy-D-altrose onto the 19-hydroxy group of sordaricin to give 4'-O-demethylsordarin. The methyltransferase sdnD would complete the biosynthesis of sordarin. Sordarin can be further modified into hypoxysordarin. The unique acyl chain at the 3'-hydroxy group of hypoxysordarin would be constructed by an iterative type I PKS sdnO and the trans-acting polyketide methyltransferase sdnL. SdnL would be responsible for the introduction of an alpha-methyl group of the polyketide chain. Alternatively, the beta-lactamase-like protein sdnR might be responsible for the cleavage and transfer of the polyketide chain from the PKS sdnO to sordarin. Two putative cytochrome P450 monooxygenases, sdnQ and sdnT, might catalyze the epoxidations of the polyketide chain to complete the biosynthesis of hypoxysordarin. Transcriptional regulators sdnM and sdnS are presumably encoded for the transcriptional regulation of the expression of the sdn gene cluster. The polypeptide is Cytochrome P450 monooxygenase sdnF (Sordaria araneosa (Pleurage araneosa)).